Here is a 79-residue protein sequence, read N- to C-terminus: UPF0291 protein BH2353 (79 aa).

The interval 57-79 (GAGNDVTPDKLKQSKNKYRNDIH) is disordered. The segment covering 63–79 (TPDKLKQSKNKYRNDIH) has biased composition (basic and acidic residues).

It belongs to the UPF0291 family.

It is found in the cytoplasm. This is UPF0291 protein BH2353 from Halalkalibacterium halodurans (strain ATCC BAA-125 / DSM 18197 / FERM 7344 / JCM 9153 / C-125) (Bacillus halodurans).